Consider the following 720-residue polypeptide: Hexanoyl-CoA synthase (720 aa).

Residues 242-262 form a helical membrane-spanning segment; that stretch reads VDAVVIYLAIVLAGYVVVSIA. Residue 290 to 293 participates in CoA binding; the sequence is RGKK. ATP is bound by residues 477–479, 499–504, glutamate 585, and arginine 607; these read GEA and EMCGGT. Position 615 (glycine 615) interacts with CoA. Lysine 618 provides a ligand contact to ATP. A CoA-binding site is contributed by glutamine 681.

It belongs to the ATP-dependent AMP-binding enzyme family. Mg(2+) is required as a cofactor. Accumulates in glandular trichomes, especially in female flowers. Present at low levels in roots, stems and leaves.

It is found in the cytoplasm. The protein localises to the cytosol. Its subcellular location is the membrane. It carries out the reaction hexanoate + ATP + CoA = hexanoyl-CoA + AMP + diphosphate. Its pathway is secondary metabolite biosynthesis; terpenoid biosynthesis. Inhibitied by high CoA concentrations. Involved in the biosynthesis of cannabinoids-related terpenophenolic natural products, which have pharmacological activity. Acyl-activating enzyme that catalyzes the conversion of hexanoic acid to hexanoyl-CoA, precursor of the cannabinoid pathway. Can also activate other fatty acids including heptanoate, octanoate and nonanoate. This Cannabis sativa (Hemp) protein is Hexanoyl-CoA synthase.